The chain runs to 195 residues: Dephospho-CoA kinase (195 aa).

Residues 4–195 enclose the DPCK domain; the sequence is IIGLTGGIAS…EQILDALQRL (192 aa). Residue 12 to 17 participates in ATP binding; sequence ASGKST.

Belongs to the CoaE family.

The protein localises to the cytoplasm. The catalysed reaction is 3'-dephospho-CoA + ATP = ADP + CoA + H(+). The protein operates within cofactor biosynthesis; coenzyme A biosynthesis; CoA from (R)-pantothenate: step 5/5. Functionally, catalyzes the phosphorylation of the 3'-hydroxyl group of dephosphocoenzyme A to form coenzyme A. The protein is Dephospho-CoA kinase of Streptococcus agalactiae serotype III (strain NEM316).